The sequence spans 239 residues: Fatty acid metabolism regulator protein (239 aa).

The HTH gntR-type domain occupies 6 to 74 (QSPAGFAEEY…HGKPTKVNNF (69 aa)). The segment at residues 34-53 (ERELSELIGVTRTTLREVLQ) is a DNA-binding region (H-T-H motif).

Homodimer.

It localises to the cytoplasm. Multifunctional regulator of fatty acid metabolism. Represses transcription of at least eight genes required for fatty acid transport and beta-oxidation including fadA, fadB, fadD, fadL and fadE. Activates transcription of at least three genes required for unsaturated fatty acid biosynthesis: fabA, fabB and iclR, the gene encoding the transcriptional regulator of the aceBAK operon encoding the glyoxylate shunt enzymes. Binding of FadR is specifically inhibited by long chain fatty acyl-CoA compounds. This is Fatty acid metabolism regulator protein from Salmonella typhi.